The following is a 366-amino-acid chain: UDP-N-acetylglucosamine--N-acetylmuramyl-(pentapeptide) pyrophosphoryl-undecaprenol N-acetylglucosamine transferase (366 aa).

UDP-N-acetyl-alpha-D-glucosamine is bound by residues 14–16 (TGG), asparagine 128, arginine 169, serine 201, isoleucine 251, and glutamine 296.

Belongs to the glycosyltransferase 28 family. MurG subfamily.

The protein localises to the cell inner membrane. The enzyme catalyses di-trans,octa-cis-undecaprenyl diphospho-N-acetyl-alpha-D-muramoyl-L-alanyl-D-glutamyl-meso-2,6-diaminopimeloyl-D-alanyl-D-alanine + UDP-N-acetyl-alpha-D-glucosamine = di-trans,octa-cis-undecaprenyl diphospho-[N-acetyl-alpha-D-glucosaminyl-(1-&gt;4)]-N-acetyl-alpha-D-muramoyl-L-alanyl-D-glutamyl-meso-2,6-diaminopimeloyl-D-alanyl-D-alanine + UDP + H(+). It participates in cell wall biogenesis; peptidoglycan biosynthesis. Functionally, cell wall formation. Catalyzes the transfer of a GlcNAc subunit on undecaprenyl-pyrophosphoryl-MurNAc-pentapeptide (lipid intermediate I) to form undecaprenyl-pyrophosphoryl-MurNAc-(pentapeptide)GlcNAc (lipid intermediate II). The polypeptide is UDP-N-acetylglucosamine--N-acetylmuramyl-(pentapeptide) pyrophosphoryl-undecaprenol N-acetylglucosamine transferase (Christiangramia forsetii (strain DSM 17595 / CGMCC 1.15422 / KT0803) (Gramella forsetii)).